Consider the following 429-residue polypeptide: Ribosomal RNA small subunit methyltransferase B (429 aa).

S-adenosyl-L-methionine contacts are provided by residues 254 to 260 (CAAPGGK), Asp-277, Asp-303, and Asp-322. Residue Cys-375 is the Nucleophile of the active site. The tract at residues 397 to 419 (ALSETGTPDQPGQQNLPGGEEGD) is disordered. The segment covering 400–412 (ETGTPDQPGQQNL) has biased composition (polar residues).

Belongs to the class I-like SAM-binding methyltransferase superfamily. RsmB/NOP family.

The protein localises to the cytoplasm. It catalyses the reaction cytidine(967) in 16S rRNA + S-adenosyl-L-methionine = 5-methylcytidine(967) in 16S rRNA + S-adenosyl-L-homocysteine + H(+). Functionally, specifically methylates the cytosine at position 967 (m5C967) of 16S rRNA. The sequence is that of Ribosomal RNA small subunit methyltransferase B from Salmonella newport (strain SL254).